We begin with the raw amino-acid sequence, 295 residues long: G1/S-specific cyclin-D1 (295 aa).

One can recognise a Cyclin N-terminal domain in the interval 28–152 (LRAMLKAEET…LLVNKLKWNL (125 aa)). The tract at residues 264 to 295 (QQSLDPKAAEEEEEEEEADLACTPTDVRDVNI) is disordered. K270 is covalently cross-linked (Glycyl lysine isopeptide (Lys-Gly) (interchain with G-Cter in ubiquitin)). Over residues 273–282 (EEEEEEEEAD) the composition is skewed to acidic residues. T286 bears the Phosphothreonine mark.

It belongs to the cyclin family. Cyclin D subfamily. Interacts with either CDK4 or CDK6 protein kinase to form a serine/threonine kinase holoenzyme complex. The cyclin subunit imparts substrate specificity to the complex. Component of the ternary complex CCND1/CDK4/CDKN1B required for nuclear translocation and modulation of CDK4-mediated kinase activity. Interacts directly with CDKN1B. Can form similar complexes with either CDKN1A or CDKN2A. Interacts with UHRF2; the interaction ubiquitinates CCND1 and appears to occur independently of phosphorylation. Interacts with USP2. Interacts (via cyclin N-terminal domain) with INSM1 (via N-terminal region); the interaction competes with the binding of CCND1 to CDK4 during cell cycle progression and inhibits CDK4 activity. Interacts with CDK4; the interaction is prevented with the binding of CCND1 to INSM1 during cell cycle progression. Phosphorylation at Thr-286 by MAP kinases is required for ubiquitination and degradation by the DCX(AMBRA1) complex. It also plays an essential role for recognition by the FBXO31 component of SCF (SKP1-cullin-F-box) protein ligase complex following DNA damage. In terms of processing, ubiquitinated at Lys-270 by the DCX(AMBRA1) complex during the transition from G1 to S cell phase, leading to its degradation: ubiquitination is dependent on Thr-286 phosphorylation. The DCX(AMBRA1) complex represents the major regulator of CCND1 stability during the G1/S transition. Also ubiquitinated by the SCF(FBXO4) and Cul7-RING(FBXW8) ubiquitin-protein ligase complexes. Following DNA damage it is ubiquitinated by the SCF(FBXO31) protein ligase complex. SCF(FBXO31) ubiquitination is dependent on Thr-286 phosphorylation. Ubiquitinated also by UHRF2 apparently in a phosphorylation-independent manner. Ubiquitination leads to its degradation and G1 arrest. Deubiquitinated by USP2; leading to its stabilization.

Its subcellular location is the nucleus. The protein resides in the cytoplasm. It localises to the nucleus membrane. Functionally, regulatory component of the cyclin D1-CDK4 (DC) complex that phosphorylates and inhibits members of the retinoblastoma (RB) protein family including RB1 and regulates the cell-cycle during G(1)/S transition. Phosphorylation of RB1 allows dissociation of the transcription factor E2F from the RB/E2F complex and the subsequent transcription of E2F target genes which are responsible for the progression through the G(1) phase. Hypophosphorylates RB1 in early G(1) phase. Cyclin D-CDK4 complexes are major integrators of various mitogenenic and antimitogenic signals. Also a substrate for SMAD3, phosphorylating SMAD3 in a cell-cycle-dependent manner and repressing its transcriptional activity. Component of the ternary complex, cyclin D1/CDK4/CDKN1B, required for nuclear translocation and activity of the cyclin D-CDK4 complex. Exhibits transcriptional corepressor activity with INSM1 on the NEUROD1 and INS promoters in a cell cycle-independent manner. This is G1/S-specific cyclin-D1 (CCND1) from Canis lupus familiaris (Dog).